A 234-amino-acid chain; its full sequence is Probable porphobilinogen deaminase (234 aa).

It belongs to the HMBS family.

It carries out the reaction 4 porphobilinogen + H2O = hydroxymethylbilane + 4 NH4(+). The protein operates within porphyrin-containing compound metabolism; protoporphyrin-IX biosynthesis; coproporphyrinogen-III from 5-aminolevulinate: step 2/4. Tetrapolymerization of the monopyrrole PBG into the hydroxymethylbilane pre-uroporphyrinogen in several discrete steps. This Chlamydia pneumoniae (Chlamydophila pneumoniae) protein is Probable porphobilinogen deaminase (hemC).